A 141-amino-acid chain; its full sequence is ATP synthase epsilon chain (141 aa).

It belongs to the ATPase epsilon chain family. As to quaternary structure, F-type ATPases have 2 components, CF(1) - the catalytic core - and CF(0) - the membrane proton channel. CF(1) has five subunits: alpha(3), beta(3), gamma(1), delta(1), epsilon(1). CF(0) has three main subunits: a, b and c.

The protein localises to the cell inner membrane. Functionally, produces ATP from ADP in the presence of a proton gradient across the membrane. In Pseudomonas fluorescens (strain Pf0-1), this protein is ATP synthase epsilon chain.